The primary structure comprises 405 residues: MALVVQKYGGTSVGDLERIHKVAQRIAHYREKGHRLAVVVSAMGHTTDELIALAKRVNPRPPFRELDLLTTTGEQVSVALLSMQLWAMGIPAKGFVQHQIGITTDGRYGDARILEVNPARIREALEQGFVAVIAGFMGTTPEGEITTLGRGGSDTTAVAIAAALGAKECEIYTDTEGVYTTDPHLIPEARKLSVIGYDQMLEMAALGARVLHPRAVYYAKRYGVVLHVRSSFSYNPGTLVKEVAMEMDKAVTGVALDLDHAQIGLIGIPDQPGIAAKVFQALAERGIAVDMIIQGVPGHDPSRQQMAFTVKKDFAQEALEALEPVLAEIGGEAILRPDIAKVSIVGVGLASTPEVPAKMFQAVASTGANIEMIATSEVRISVIIPAEYAEAALRAVHQAFELDKA.

7 to 10 contributes to the ATP binding site; the sequence is KYGG. 25–30 contributes to the substrate binding site; sequence RIAHYR. Serine 41 serves as a coordination point for ATP. Substrate contacts are provided by residues 47–49, glutamate 74, 125–126, 150–153, and serine 153; these read TDE, LE, and RGGS. ATP contacts are provided by residues 173–174, 179–184, and arginine 209; these read TD and YTTDPH. ACT domains follow at residues 263 to 342 and 344 to 405; these read IGLI…IAKV and IVGV…LDKA. Residues aspartate 270, 288–290, glutamine 294, 355–356, 369–370, and 376–377 each bind substrate; these read AVD, VP, NI, and SE.

It belongs to the aspartokinase family. As to quaternary structure, tetramer consisting of 2 isoforms Alpha (catalytic and regulation) and of a homodimer of 2 isoforms Beta (regulation).

The catalysed reaction is L-aspartate + ATP = 4-phospho-L-aspartate + ADP. Its pathway is amino-acid biosynthesis; L-lysine biosynthesis via DAP pathway; (S)-tetrahydrodipicolinate from L-aspartate: step 1/4. It participates in amino-acid biosynthesis; L-methionine biosynthesis via de novo pathway; L-homoserine from L-aspartate: step 1/3. It functions in the pathway amino-acid biosynthesis; L-threonine biosynthesis; L-threonine from L-aspartate: step 1/5. Functionally, catalyzes the phosphorylation of the beta-carboxyl group of aspartic acid with ATP to yield 4-phospho-L-aspartate, which is involved in the branched biosynthetic pathway leading to the biosynthesis of amino acids lysine, threonine, isoleucine and methionine. The chain is Aspartokinase (ask) from Thermus thermophilus (strain ATCC BAA-163 / DSM 7039 / HB27).